The chain runs to 479 residues: MAMDIEKKIYLKRQLGYFWGTNFLIINIIGAGIFVSPKGVLQYSSMNVGVSLCVWVFCAVLSMTSTLCAAEIGITFPYTVAHYYFLKRCFGPFVAFLRLWTSLFTGPGVLASQALLLAEYGIQPFYPSCSAPAVPKKCLALAMLWIVGILNSRGVKELSWLQTVSMVLKMGILSFISLSGLFLLVTGRKENVRRLQNAFDAEFPEVSRLIEAIFQGYFAFSGGGSFTYVAGELKEPSKTIPRCIFTALPLVTVVYLLANLSYLTVLSPQELLSSDAVALTWTDRVIPQLTWSVPFAISASLFSNLVTSVFETSRTSYIASRNGQLPLLCSTLNVHSSPFIAVLLDVSMGSIAIVLTNLIELINYLFFVFSIWTVLSVIGILKLRYQEPNLHRPYKVFSPFLFITAAISLSMVLIPLIKSPKMQYIYVFLFFLGGLLFYVPLIHFKLKLIWFQKLTCYLQLLFNICIPDVSDEHVAEEES.

Over 1 to 14 the chain is Cytoplasmic; that stretch reads MAMDIEKKIYLKRQ. A helical transmembrane segment spans residues 15–35; sequence LGYFWGTNFLIINIIGAGIFV. Residues 36–47 lie on the Extracellular side of the membrane; that stretch reads SPKGVLQYSSMN. The chain crosses the membrane as a helical span at residues 48–68; it reads VGVSLCVWVFCAVLSMTSTLC. The Cytoplasmic segment spans residues 69–89; that stretch reads AAEIGITFPYTVAHYYFLKRC. The helical transmembrane segment at 90-110 threads the bilayer; that stretch reads FGPFVAFLRLWTSLFTGPGVL. Over 111–129 the chain is Extracellular; that stretch reads ASQALLLAEYGIQPFYPSC. A helical membrane pass occupies residues 130–150; that stretch reads SAPAVPKKCLALAMLWIVGIL. Residues 151-165 are Cytoplasmic-facing; sequence NSRGVKELSWLQTVS. Residues 166-186 form a helical membrane-spanning segment; the sequence is MVLKMGILSFISLSGLFLLVT. Residues 187 to 208 are Extracellular-facing; that stretch reads GRKENVRRLQNAFDAEFPEVSR. Residues 209 to 229 form a helical membrane-spanning segment; that stretch reads LIEAIFQGYFAFSGGGSFTYV. The Cytoplasmic portion of the chain corresponds to 230-242; sequence AGELKEPSKTIPR. Residues 243–263 form a helical membrane-spanning segment; the sequence is CIFTALPLVTVVYLLANLSYL. At 264–289 the chain is on the extracellular side; sequence TVLSPQELLSSDAVALTWTDRVIPQL. Residues 290–310 form a helical membrane-spanning segment; that stretch reads TWSVPFAISASLFSNLVTSVF. Topologically, residues 311–338 are cytoplasmic; sequence ETSRTSYIASRNGQLPLLCSTLNVHSSP. A helical transmembrane segment spans residues 339-359; that stretch reads FIAVLLDVSMGSIAIVLTNLI. Residue E360 is a topological domain, extracellular. A helical transmembrane segment spans residues 361–381; that stretch reads LINYLFFVFSIWTVLSVIGIL. Residues 382-396 lie on the Cytoplasmic side of the membrane; sequence KLRYQEPNLHRPYKV. The chain crosses the membrane as a helical span at residues 397-417; it reads FSPFLFITAAISLSMVLIPLI. Over 418-423 the chain is Extracellular; it reads KSPKMQ. A helical transmembrane segment spans residues 424–444; that stretch reads YIYVFLFFLGGLLFYVPLIHF. The Cytoplasmic portion of the chain corresponds to 445–479; that stretch reads KLKLIWFQKLTCYLQLLFNICIPDVSDEHVAEEES.

The protein belongs to the amino acid-polyamine-organocation (APC) superfamily. In terms of assembly, disulfide-linked heterodimer composed of the catalytic light subunit SLC7A13 and the heavy subunit SLC3A1.

It localises to the apical cell membrane. The enzyme catalyses L-cystine(out) + L-aspartate(in) = L-cystine(in) + L-aspartate(out). It carries out the reaction L-cystine(out) = L-cystine(in). It catalyses the reaction L-aspartate(in) + L-glutamate(out) = L-aspartate(out) + L-glutamate(in). The catalysed reaction is L-aspartate(in) + L-glutamine(out) = L-aspartate(out) + L-glutamine(in). The enzyme catalyses L-aspartate(in) + L-methionine(out) = L-aspartate(out) + L-methionine(in). It carries out the reaction L-leucine(out) + L-aspartate(in) = L-leucine(in) + L-aspartate(out). It catalyses the reaction L-valine(out) + L-aspartate(in) = L-valine(in) + L-aspartate(out). The catalysed reaction is L-aspartate(in) + L-phenylalanine(out) = L-aspartate(out) + L-phenylalanine(in). The enzyme catalyses L-tyrosine(out) + L-aspartate(in) = L-tyrosine(in) + L-aspartate(out). It carries out the reaction L-tryptophan(out) + L-aspartate(in) = L-tryptophan(in) + L-aspartate(out). In terms of biological role, associates with SLC3A1/rBAT to form a functional heterodimeric complex that transports anionic and neutral amino acids across the apical plasma membrane of renal epithelium. Preferentially mediates exchange transport, but can also operate via facilitated diffusion. May act as a major transporter for L-cystine in late proximal tubules, ensuring its reabsorption from the luminal fluid in exchange for cytosolic L-glutamate or L-aspartate. This is Solute carrier family 7 member 13 (Slc7a13) from Rattus norvegicus (Rat).